The sequence spans 420 residues: Tyrosine--tRNA ligase (420 aa).

Y38 is a binding site for L-tyrosine. The short motif at 43 to 52 is the 'HIGH' region element; sequence PTGDSLHIGH. Positions 169 and 173 each coordinate L-tyrosine. A 'KMSKS' region motif is present at residues 231–235; that stretch reads KFGKS. K234 serves as a coordination point for ATP. The region spanning 353–419 is the S4 RNA-binding domain; the sequence is KNIVDFLVDT…GKRKYTLVTI (67 aa).

Belongs to the class-I aminoacyl-tRNA synthetase family. TyrS type 1 subfamily. Homodimer.

It localises to the cytoplasm. The enzyme catalyses tRNA(Tyr) + L-tyrosine + ATP = L-tyrosyl-tRNA(Tyr) + AMP + diphosphate + H(+). Catalyzes the attachment of tyrosine to tRNA(Tyr) in a two-step reaction: tyrosine is first activated by ATP to form Tyr-AMP and then transferred to the acceptor end of tRNA(Tyr). This Lactobacillus acidophilus (strain ATCC 700396 / NCK56 / N2 / NCFM) protein is Tyrosine--tRNA ligase.